The chain runs to 71 residues: DNA-directed RNA polymerase subunit omega (71 aa).

This sequence belongs to the RNA polymerase subunit omega family. As to quaternary structure, the RNAP catalytic core consists of 2 alpha, 1 beta, 1 beta' and 1 omega subunit. When a sigma factor is associated with the core the holoenzyme is formed, which can initiate transcription.

The catalysed reaction is RNA(n) + a ribonucleoside 5'-triphosphate = RNA(n+1) + diphosphate. Its function is as follows. Promotes RNA polymerase assembly. Latches the N- and C-terminal regions of the beta' subunit thereby facilitating its interaction with the beta and alpha subunits. The chain is DNA-directed RNA polymerase subunit omega from Campylobacter concisus (strain 13826).